Consider the following 216-residue polypeptide: MOB kinase activator 3C (216 aa).

Zn(2+)-binding residues include cysteine 82, cysteine 87, histidine 164, and histidine 169.

This sequence belongs to the MOB1/phocein family.

Its function is as follows. May regulate the activity of kinases. The polypeptide is MOB kinase activator 3C (MOB3C) (Bos taurus (Bovine)).